A 333-amino-acid chain; its full sequence is Casein kinase II subunit alpha-2 (333 aa).

Residues 34–319 (YEVVRKVGRG…AREAMAHPYF (286 aa)) form the Protein kinase domain. ATP is bound by residues 40 to 48 (VGRGKYSEV) and Lys63. Asp151 serves as the catalytic Proton acceptor.

Belongs to the protein kinase superfamily. Ser/Thr protein kinase family. CK2 subfamily. Monomer. In terms of processing, autophosphorylated.

Its subcellular location is the cytoplasm. The catalysed reaction is L-seryl-[protein] + ATP = O-phospho-L-seryl-[protein] + ADP + H(+). It carries out the reaction L-threonyl-[protein] + ATP = O-phospho-L-threonyl-[protein] + ADP + H(+). Functionally, casein kinases are operationally defined by their preferential utilization of acidic proteins such as caseins as substrates. It can phosphorylate a large number of proteins. Involved in photoperiod sensitivity (PS). Increases days-to-heading under natural day (ND) and long day (LD) conditions, but not under short day (SD) conditions. The sequence is that of Casein kinase II subunit alpha-2 from Oryza sativa subsp. indica (Rice).